Consider the following 608-residue polypeptide: MNHFPKLLSSQIGFDVAQTMLENFDRHYRIFREAAVDAKTLYERADWHGLQRLARERITSYDDRVQECVEVLQDEYDAENIDDEVWQQIKLHYIGLLTSHRQPECAETFFNSVCCKILHRSYFSNDFIFVRPAISTEYLENDEPAAKPTYRAYYPGTDGLAATLERIVTNFQLEPPFEDLTRDIGCVMQAITDEFGEFDAAPNFQIHVLSSLFFRNKSAYIVGRIINADRVLPFAVPIRHVRPGLLALDTLLLRRDLLQIIFSFSHSYFLVDMGVPSAYVEFLCTIMPGKPKAEIYTSVGLQKQGKNLFYRDLLHHLSHSSDRFIIAPGIKGLVMLVFTLPSFPYVFKIIKDHFPPPKETTREQIMEKYQLVKRHDRLGRMADTLEYSSVALPISRLDHALVRELEKEVPSLLEYEDGNLVIKHLYIERRMIPLNLYLQNGTDAEIEHGVKEYGNAVKELMKANIFPGDMLYKNFGVTRHGRVVFYDYDEIEYLTDCNVRRVPPPRNEEDELSGEPWYTVGPHDIFPETYGPFLLGDPRVRAVFMKHHADFFEASLWQASKDKLLQGELPDFFPYDVSLRFSVRYPDRFDATPDAGDGDSAGNAQRAA.

Residues A327–L333 and K348 each bind ATP. D383 is a catalytic residue.

It belongs to the AceK family.

Its subcellular location is the cytoplasm. The enzyme catalyses L-seryl-[isocitrate dehydrogenase] + ATP = O-phospho-L-seryl-[isocitrate dehydrogenase] + ADP + H(+). In terms of biological role, bifunctional enzyme which can phosphorylate or dephosphorylate isocitrate dehydrogenase (IDH) on a specific serine residue. This is a regulatory mechanism which enables bacteria to bypass the Krebs cycle via the glyoxylate shunt in response to the source of carbon. When bacteria are grown on glucose, IDH is fully active and unphosphorylated, but when grown on acetate or ethanol, the activity of IDH declines drastically concomitant with its phosphorylation. This Burkholderia ambifaria (strain ATCC BAA-244 / DSM 16087 / CCUG 44356 / LMG 19182 / AMMD) (Burkholderia cepacia (strain AMMD)) protein is Isocitrate dehydrogenase kinase/phosphatase.